Consider the following 533-residue polypeptide: Suppressor of cytokine signaling 6 (533 aa).

2 disordered regions span residues 54–136 and 177–199; these read CDIG…WPLR and ELRD…PGDL. Residues 59–69 show a composition bias toward basic and acidic residues; it reads EDEKGKNRSKS. A compositionally biased stretch (basic residues) spans 76 to 88; sequence LKRRLSAKQKTKG. Residues 177–189 are compositionally biased toward basic and acidic residues; it reads ELRDLQPEPRPES. The 108-residue stretch at 382–489 folds into the SH2 domain; sequence WYWGPITRWE…TYPVRLTNPV (108 aa). Positions 484–533 constitute an SOCS box domain; it reads RLTNPVSRFMQVRSLQYLCRFVIRQYTRIDLIQKLPLPNKMKDYLQEKHY.

Interacts with KIT (phosphorylated). Interacts with RBCK1. Interacts with phosphorylated IRS4. Interacts with PIM3.

The protein operates within protein modification; protein ubiquitination. Its function is as follows. SOCS family proteins form part of a classical negative feedback system that regulates cytokine signal transduction. May be a substrate recognition component of a SCF-like ECS (Elongin BC-CUL2/5-SOCS-box protein) E3 ubiquitin-protein ligase complex which mediates the ubiquitination and subsequent proteasomal degradation of target proteins. Regulates KIT degradation by ubiquitination of the tyrosine-phosphorylated receptor. This is Suppressor of cytokine signaling 6 (Socs6) from Mus musculus (Mouse).